The chain runs to 405 residues: Argininosuccinate synthase (405 aa).

8–16 (AYSGGLDTS) provides a ligand contact to ATP. Residues Tyr-86 and Ser-91 each coordinate L-citrulline. ATP is bound at residue Gly-116. L-aspartate-binding residues include Thr-118, Asn-122, and Asp-123. Residue Asn-122 participates in L-citrulline binding. L-citrulline-binding residues include Arg-126, Ser-175, Ser-184, Glu-260, and Tyr-272.

This sequence belongs to the argininosuccinate synthase family. Type 1 subfamily. As to quaternary structure, homotetramer.

The protein resides in the cytoplasm. The enzyme catalyses L-citrulline + L-aspartate + ATP = 2-(N(omega)-L-arginino)succinate + AMP + diphosphate + H(+). It participates in amino-acid biosynthesis; L-arginine biosynthesis; L-arginine from L-ornithine and carbamoyl phosphate: step 2/3. The protein is Argininosuccinate synthase of Koribacter versatilis (strain Ellin345).